Reading from the N-terminus, the 335-residue chain is MKIGVIGSGSFGTALGSLLADKGYEVILWCRNDSQVESINRNHINNKHLPNFTLPEKLTASKDLRNVVQGKDMIVSSPPSHALSEVLREIKEYLPEKVPIVSASKGIENGTLRLVSEIFESELPEKYHSYLSYLSGPSFAKEIIQKVPTIVSIASKNETTARKVQEIFSFLYFRTYWTPDVIGVEVGGSLKNVIALAAGVSDGLGFGQNTRAALITRGLNEITKIGLKLGADPMTFLGPSGMGDLILTCCGEQSRNRTVGFRLGKGETLEQILSSMNEVAEGVKTTQSAYELSQKLGIEMAITNEVYKMLYEGKNPREVVKDLMKRDLKREGVSV.

NADPH-binding residues include S10, F11, R31, and K105. Sn-glycerol 3-phosphate-binding residues include K105, G136, and S138. An NADPH-binding site is contributed by A140. Sn-glycerol 3-phosphate-binding residues include K191, D244, S254, R255, and N256. Residue K191 is the Proton acceptor of the active site. R255 serves as a coordination point for NADPH. NADPH contacts are provided by V279 and E281.

This sequence belongs to the NAD-dependent glycerol-3-phosphate dehydrogenase family.

It localises to the cytoplasm. The enzyme catalyses sn-glycerol 3-phosphate + NAD(+) = dihydroxyacetone phosphate + NADH + H(+). The catalysed reaction is sn-glycerol 3-phosphate + NADP(+) = dihydroxyacetone phosphate + NADPH + H(+). It participates in membrane lipid metabolism; glycerophospholipid metabolism. Catalyzes the reduction of the glycolytic intermediate dihydroxyacetone phosphate (DHAP) to sn-glycerol 3-phosphate (G3P), the key precursor for phospholipid synthesis. This Leptospira interrogans serogroup Icterohaemorrhagiae serovar Lai (strain 56601) protein is Glycerol-3-phosphate dehydrogenase [NAD(P)+].